A 240-amino-acid chain; its full sequence is MATAMYLEHYLDSIENLPCELQRNFQLMRELDQRTEDKKAEIDILAAEYISTVKTLSSAQRVEHLQKIQSAYSKCKEYSDDKVQLAMQTYEMVDKHIRRLDADLARFEADLKDRMDGSDFESTGARSLKKGRSQKEKRSSRGRGRRTSEEDTPKKKKHKSGSEFTDSILSVHPSDVLDMPVDPNEPTYCLCHQVSYGEMIGCDNPDCPIEWFHFACVDLTTKPKGKWFCPRCVQEKRKKK.

Positions 115–165 (MDGSDFESTGARSLKKGRSQKEKRSSRGRGRRTSEEDTPKKKKHKSGSEFT) are disordered. A Phosphoserine modification is found at Ser-118. Arg-126 is modified (omega-N-methylarginine). The PHD-type zinc finger occupies 186–235 (PTYCLCHQVSYGEMIGCDNPDCPIEWFHFACVDLTTKPKGKWFCPRCVQE). Zn(2+) is bound by residues Cys-189, Cys-191, Cys-202, Cys-207, His-213, Cys-216, Cys-229, and Cys-232.

The protein belongs to the ING family. Component of the HBO1 complex composed of KAT7/HBO1, MEAF6, ING5, and one scaffold subunit: complexes containing BRPF scaffold (BRPF1, BRD1/BRPF2 or BRPF3) direct KAT7/HBO1 specificity towards H3K14ac, while complexes containing JADE scaffold (JADE1, JADE2 and JADE3) mediate acetylation of histone H4. Component of the MOZ/MORF complex composed at least of ING5, KAT6A, KAT6B, MEAF6 and one of BRPF1, BRD1/BRPF2 and BRPF3. Interacts with H3K4me3 and to a lesser extent with H3K4me2. Interacts with EP300 and p53/TP53. Interacts with INCA1.

Its subcellular location is the nucleus. The protein resides in the chromosome. Component of the HBO1 complex, which specifically mediates acetylation of histone H3 at 'Lys-14' (H3K14ac) and, to a lower extent, acetylation of histone H4. Component of the MOZ/MORF complex which has a histone H3 acetyltransferase activity. Through chromatin acetylation it may regulate DNA replication and may function as a transcriptional coactivator. Inhibits cell growth, induces a delay in S-phase progression and enhances Fas-induced apoptosis in an INCA1-dependent manner. The sequence is that of Inhibitor of growth protein 5 (Ing5) from Mus musculus (Mouse).